We begin with the raw amino-acid sequence, 130 residues long: MAMKIRLARGGSKKRPFYRIVASDSRMPRDGRFIEKLGTYNPLLPKDSEDRVKMDMERVQHWLDQGAQPTDRISRFLEAAGHTPKKERANMKKAQPGKKAVERAEEKAAKASAAAEAPAEAPAAEAAAEE.

Residues 80-130 form a disordered region; that stretch reads AGHTPKKERANMKKAQPGKKAVERAEEKAAKASAAAEAPAEAPAAEAAAEE. A compositionally biased stretch (basic and acidic residues) spans 99-109; sequence KAVERAEEKAA. Over residues 110 to 130 the composition is skewed to low complexity; that stretch reads KASAAAEAPAEAPAAEAAAEE.

The protein belongs to the bacterial ribosomal protein bS16 family.

This chain is Small ribosomal subunit protein bS16, found in Jannaschia sp. (strain CCS1).